The chain runs to 317 residues: Aspartate carbamoyltransferase catalytic subunit (317 aa).

2 residues coordinate carbamoyl phosphate: Arg-64 and Thr-65. Lys-92 lines the L-aspartate pocket. Carbamoyl phosphate-binding residues include Arg-114, His-142, and Gln-145. Positions 176 and 230 each coordinate L-aspartate. Residues Gly-271 and Pro-272 each coordinate carbamoyl phosphate.

Belongs to the aspartate/ornithine carbamoyltransferase superfamily. ATCase family. In terms of assembly, heterododecamer (2C3:3R2) of six catalytic PyrB chains organized as two trimers (C3), and six regulatory PyrI chains organized as three dimers (R2).

It carries out the reaction carbamoyl phosphate + L-aspartate = N-carbamoyl-L-aspartate + phosphate + H(+). It participates in pyrimidine metabolism; UMP biosynthesis via de novo pathway; (S)-dihydroorotate from bicarbonate: step 2/3. In terms of biological role, catalyzes the condensation of carbamoyl phosphate and aspartate to form carbamoyl aspartate and inorganic phosphate, the committed step in the de novo pyrimidine nucleotide biosynthesis pathway. The protein is Aspartate carbamoyltransferase catalytic subunit of Nitratidesulfovibrio vulgaris (strain ATCC 29579 / DSM 644 / CCUG 34227 / NCIMB 8303 / VKM B-1760 / Hildenborough) (Desulfovibrio vulgaris).